The chain runs to 487 residues: Protein nucleotidyltransferase YdiU (487 aa).

ATP-binding residues include Gly-86, Gly-88, Arg-89, Lys-109, Asp-121, Gly-122, Arg-172, and Arg-179. The active-site Proton acceptor is Asp-248. Positions 249 and 258 each coordinate Mg(2+). Residue Asp-258 participates in ATP binding.

This sequence belongs to the SELO family. Requires Mg(2+) as cofactor. Mn(2+) serves as cofactor.

The enzyme catalyses L-seryl-[protein] + ATP = 3-O-(5'-adenylyl)-L-seryl-[protein] + diphosphate. It catalyses the reaction L-threonyl-[protein] + ATP = 3-O-(5'-adenylyl)-L-threonyl-[protein] + diphosphate. The catalysed reaction is L-tyrosyl-[protein] + ATP = O-(5'-adenylyl)-L-tyrosyl-[protein] + diphosphate. It carries out the reaction L-histidyl-[protein] + UTP = N(tele)-(5'-uridylyl)-L-histidyl-[protein] + diphosphate. The enzyme catalyses L-seryl-[protein] + UTP = O-(5'-uridylyl)-L-seryl-[protein] + diphosphate. It catalyses the reaction L-tyrosyl-[protein] + UTP = O-(5'-uridylyl)-L-tyrosyl-[protein] + diphosphate. Nucleotidyltransferase involved in the post-translational modification of proteins. It can catalyze the addition of adenosine monophosphate (AMP) or uridine monophosphate (UMP) to a protein, resulting in modifications known as AMPylation and UMPylation. This chain is Protein nucleotidyltransferase YdiU, found in Sphingopyxis alaskensis (strain DSM 13593 / LMG 18877 / RB2256) (Sphingomonas alaskensis).